We begin with the raw amino-acid sequence, 685 residues long: Probable glucan endo-1,3-beta-glucosidase btgC (685 aa).

3 disordered regions span residues 1 to 96 (MSGP…NLGP), 119 to 168 (GIDA…RDSY), and 180 to 202 (PAGQLTPGGSNPSQRSLFDSPYQ). Residues 1–312 (MSGPHRSFSF…PTPGGGSRKR (312 aa)) lie on the Cytoplasmic side of the membrane. 2 stretches are compositionally biased toward polar residues: residues 47-61 (SARSQAMGSSPSSGF) and 73-90 (GQNSGHTQAMRTNSTTPG). The helical; Signal-anchor for type II membrane protein transmembrane segment at 313–333 (GWIVGLALAFIVVGAIVGGAV) threads the bilayer. Over 334–685 (GGTLGNRENE…IPDCGGKTAA (352 aa)) the chain is Extracellular. The interval 335–369 (GTLGNRENEAPDTTKSASSDTESNGDLNKDSSEIK) is disordered. Residues 345-360 (PDTTKSASSDTESNGD) show a composition bias toward polar residues. Asn405, Asn428, and Asn456 each carry an N-linked (GlcNAc...) asparagine glycan. Glu488 (proton donor) is an active-site residue. Glu587 serves as the catalytic Nucleophile. The N-linked (GlcNAc...) asparagine glycan is linked to Asn632.

This sequence belongs to the glycosyl hydrolase 17 family.

Its subcellular location is the cell membrane. It catalyses the reaction Hydrolysis of (1-&gt;3)-beta-D-glucosidic linkages in (1-&gt;3)-beta-D-glucans.. Functionally, glucanases play a role in cell expansion during growth, in cell-cell fusion during mating, and in spore release during sporulation. This enzyme may be involved in beta-glucan degradation. Active on laminarin and lichenan. The sequence is that of Probable glucan endo-1,3-beta-glucosidase btgC (btgC) from Aspergillus oryzae (strain ATCC 42149 / RIB 40) (Yellow koji mold).